Reading from the N-terminus, the 131-residue chain is Small ribosomal subunit protein eS24 (131 aa).

The segment at 93–131 (RHGLYEKKKTSRKQRKERKNRMKKVRGTKKASVGAAGKK) is disordered. Positions 101–121 (KTSRKQRKERKNRMKKVRGTK) are enriched in basic residues.

The protein belongs to the eukaryotic ribosomal protein eS24 family. As to quaternary structure, component of the small ribosomal subunit. Part of the small subunit (SSU) processome, composed of more than 70 proteins and the RNA chaperone small nucleolar RNA (snoRNA) U3.

Its subcellular location is the cytoplasm. The protein localises to the nucleus. It is found in the nucleolus. Its function is as follows. Component of the small ribosomal subunit. The ribosome is a large ribonucleoprotein complex responsible for the synthesis of proteins in the cell. Required for processing of pre-rRNA and maturation of 40S ribosomal subunits. Part of the small subunit (SSU) processome, first precursor of the small eukaryotic ribosomal subunit. During the assembly of the SSU processome in the nucleolus, many ribosome biogenesis factors, an RNA chaperone and ribosomal proteins associate with the nascent pre-rRNA and work in concert to generate RNA folding, modifications, rearrangements and cleavage as well as targeted degradation of pre-ribosomal RNA by the RNA exosome. This is Small ribosomal subunit protein eS24 (rps24) from Ictalurus punctatus (Channel catfish).